Here is a 124-residue protein sequence, read N- to C-terminus: UPF0357 protein C1687.07 (124 aa).

The N-terminal stretch at 1–24 (MASFHIIVSYVTVVLAIIIAITFA) is a signal peptide.

It belongs to the UPF0357 family.

This is UPF0357 protein C1687.07 from Schizosaccharomyces pombe (strain 972 / ATCC 24843) (Fission yeast).